A 234-amino-acid chain; its full sequence is DNA repair protein RecO (234 aa).

The protein belongs to the RecO family.

Involved in DNA repair and RecF pathway recombination. The polypeptide is DNA repair protein RecO (Idiomarina loihiensis (strain ATCC BAA-735 / DSM 15497 / L2-TR)).